The sequence spans 365 residues: tRNA/tmRNA (uracil-C(5))-methyltransferase (365 aa).

S-adenosyl-L-methionine is bound by residues Gln-189, Tyr-217, Asn-222, Glu-238, and Asp-298. Catalysis depends on Cys-323, which acts as the Nucleophile. Glu-357 acts as the Proton acceptor in catalysis.

This sequence belongs to the class I-like SAM-binding methyltransferase superfamily. RNA M5U methyltransferase family. TrmA subfamily.

It catalyses the reaction uridine(54) in tRNA + S-adenosyl-L-methionine = 5-methyluridine(54) in tRNA + S-adenosyl-L-homocysteine + H(+). The catalysed reaction is uridine(341) in tmRNA + S-adenosyl-L-methionine = 5-methyluridine(341) in tmRNA + S-adenosyl-L-homocysteine + H(+). Its function is as follows. Dual-specificity methyltransferase that catalyzes the formation of 5-methyluridine at position 54 (m5U54) in all tRNAs, and that of position 341 (m5U341) in tmRNA (transfer-mRNA). In Shewanella halifaxensis (strain HAW-EB4), this protein is tRNA/tmRNA (uracil-C(5))-methyltransferase.